The following is a 147-amino-acid chain: MGFTEKQESLVNSSWESFKQNLSGYSVLFYTIILEKAPAAKGMFSFLKDTTGVQDSPQLQAHAAKVFEMVRDSAVQLRATGEVILGDATLGAIHIQKGVVDPHFVVVKEALLKTIKEAAGGNWSEELSTAWEVAYDGLAASIKKSMS.

The Globin domain occupies glycine 2–serine 147. A nitrated tyrosine mark is found at tyrosine 25 and tyrosine 30. Position 45 (serine 45) interacts with heme b. The residue at position 45 (serine 45) is a Phosphoserine. Histidine 62 is an O2 binding site. The heme b site is built by lysine 65, histidine 94, and lysine 97. At tyrosine 135 the chain carries Nitrated tyrosine.

Belongs to the plant globin family. In terms of assembly, monomer. Interacts with CAS31 in the cytoplasm; this interaction leads to its protection from denaturation under thermal and drought stresses. In terms of processing, nitrated in effective nodules and particularly in hypoxic conditions; this mechanism may play a protective role in the symbiosis by buffering toxic peroxynitrite NO(2)(-). Nitration level decrease during nodule senescence. Phosphorylation at Ser-45 disrupts the molecular environment of its porphyrin ring oxygen binding pocket, thus leading to a reduced oxygen consumption and to the delivery of oxygen O(2) to symbiosomes. As to expression, root nodules.

Its subcellular location is the cytoplasm. It is found in the nucleus. Functionally, leghemoglobin that reversibly binds oxygen O(2) through a pentacoordinated heme iron. In root nodules, facilitates the diffusion of oxygen to the bacteroids while preventing the bacterial nitrogenase from being inactivated by buffering dioxygen, nitric oxide and carbon monoxide, and promoting the formation of reactive oxygen species (ROS, e.g. H(2)O(2)). This role is essential for symbiotic nitrogen fixation (SNF). The protein is Leghemoglobin 8 of Medicago truncatula (Barrel medic).